A 606-amino-acid polypeptide reads, in one-letter code: Leucine-rich repeat and immunoglobulin-like domain-containing nogo receptor-interacting protein 1 (606 aa).

The N-terminal stretch at 1–27 is a signal peptide; it reads MILQLPSCLCPILLIVVGSILSGSASG. Intrachain disulfides connect Cys-28–Cys-34 and Cys-32–Cys-43. The LRRNT domain occupies 28 to 57; it reads CPQRCDCSPQDRSVLCHRKRYLDVPEGIPT. The Extracellular portion of the chain corresponds to 28-547; it reads CPQRCDCSPQ…FDIKTLIIAT (520 aa). 11 LRR repeats span residues 58–79, 82–103, 106–127, 130–151, 154–175, 178–199, 202–223, 250–271, 274–295, 298–319, and 322–343; these read DTRL…EFSA, YLEE…AFNG, NLRS…VFTG, NLTQ…MFQD, NLKS…AFRG, SLEE…ALSH, GLIT…SFKR, NLTS…AIRH, YLRF…MLYE, RLQE…AFRG, and HLKV…SFHS. N-linked (GlcNAc...) asparagine glycosylation is present at Asn-130. Asn-188 is a glycosylation site (N-linked (GlcNAc...) asparagine). N-linked (GlcNAc...) asparagine glycans are attached at residues Asn-250, Asn-260, and Asn-279. N-linked (GlcNAc...) asparagine glycosylation is found at Asn-327, Asn-374, Asn-478, Asn-491, Asn-512, Asn-523, and Asn-528. Residues 355–409 form the LRRCT domain; the sequence is NPLACDCRLLWIFRRRWRLNFSRQQPSCSSPEYVQGKEFKDFPDVLQPNYFTCRR. 3 disulfides stabilise this stretch: Cys-359/Cys-382, Cys-361/Cys-407, and Cys-432/Cys-483. Residues 397-496 form the Ig-like C2-type domain; it reads PDVLQPNYFT…NAGGNDTSLA (100 aa). Residues 548–568 form a helical membrane-spanning segment; it reads TMGFISFLGVVLFCLVLLFLW. Topologically, residues 569 to 606 are cytoplasmic; sequence SRGKGNTKHNIEIEYVPRKSDAGLSSADAPRKFNMKMI.

It is found in the cell membrane. Functionally, may play a role in regulating axonal regeneration and plasticity in the adult central nervous system. This Xenopus tropicalis (Western clawed frog) protein is Leucine-rich repeat and immunoglobulin-like domain-containing nogo receptor-interacting protein 1 (lingo1).